The sequence spans 246 residues: Putative F-box/LRR-repeat protein 9 (246 aa).

One can recognise an F-box domain in the interval 18-65 (YRNWAELPPELTSSILLRLGAIEILQNAQRVCKSWRRVCQDPSMWRKI).

The polypeptide is Putative F-box/LRR-repeat protein 9 (FBL9) (Arabidopsis thaliana (Mouse-ear cress)).